Here is a 431-residue protein sequence, read N- to C-terminus: Glutamate--tRNA ligase 1 (431 aa).

The short motif at 6-16 is the 'HIGH' region element; the sequence is PSPTGDMHIGN. Residues 235 to 239 carry the 'KMSKS' region motif; sequence KMSKR. Residue Lys238 participates in ATP binding.

It belongs to the class-I aminoacyl-tRNA synthetase family. Glutamate--tRNA ligase type 1 subfamily. Monomer.

Its subcellular location is the cytoplasm. The enzyme catalyses tRNA(Glu) + L-glutamate + ATP = L-glutamyl-tRNA(Glu) + AMP + diphosphate. Catalyzes the attachment of glutamate to tRNA(Glu) in a two-step reaction: glutamate is first activated by ATP to form Glu-AMP and then transferred to the acceptor end of tRNA(Glu). This Campylobacter curvus (strain 525.92) protein is Glutamate--tRNA ligase 1.